The following is a 639-amino-acid chain: Protein sly1 homolog (639 aa).

4 consecutive repeat copies span residues aspartate 85 to alanine 121, arginine 203 to glutamine 245, leucine 423 to lysine 460, and glutamine 464 to threonine 500. The tract at residues aspartate 85 to threonine 500 is 4 X approximate repeats.

The protein belongs to the STXBP/unc-18/SEC1 family. In embryos, from stage 14, expression is seen in posterior midgut, esophagus and salivary glands. No expression is seen in larval imaginal disks.

The protein localises to the cytoplasm. It is found in the membrane. Its function is as follows. Non-vital for development. The protein is Protein sly1 homolog (Slh) of Drosophila melanogaster (Fruit fly).